A 537-amino-acid chain; its full sequence is Chaperonin GroEL (537 aa).

ATP is bound by residues 29 to 32, 86 to 90, G413, 477 to 479, and D493; these read TLGP, DGTTT, and NAA.

This sequence belongs to the chaperonin (HSP60) family. Forms a cylinder of 14 subunits composed of two heptameric rings stacked back-to-back. Interacts with the co-chaperonin GroES.

It localises to the cytoplasm. It carries out the reaction ATP + H2O + a folded polypeptide = ADP + phosphate + an unfolded polypeptide.. Together with its co-chaperonin GroES, plays an essential role in assisting protein folding. The GroEL-GroES system forms a nano-cage that allows encapsulation of the non-native substrate proteins and provides a physical environment optimized to promote and accelerate protein folding. The protein is Chaperonin GroEL of Parascardovia denticolens (Bifidobacterium denticolens).